The following is a 337-amino-acid chain: Anthranilate phosphoribosyltransferase (337 aa).

5-phospho-alpha-D-ribose 1-diphosphate-binding positions include Gly-81, 84–85, Ser-89, 91–94, 109–117, and Ala-121; these read GD, NVST, and KHGNRALSS. Position 81 (Gly-81) interacts with anthranilate. Residue Ser-93 participates in Mg(2+) binding. An anthranilate-binding site is contributed by Asn-112. An anthranilate-binding site is contributed by Arg-167. Mg(2+) is bound by residues Asp-226 and Glu-227.

Belongs to the anthranilate phosphoribosyltransferase family. As to quaternary structure, homodimer. Mg(2+) serves as cofactor.

It carries out the reaction N-(5-phospho-beta-D-ribosyl)anthranilate + diphosphate = 5-phospho-alpha-D-ribose 1-diphosphate + anthranilate. It functions in the pathway amino-acid biosynthesis; L-tryptophan biosynthesis; L-tryptophan from chorismate: step 2/5. Functionally, catalyzes the transfer of the phosphoribosyl group of 5-phosphorylribose-1-pyrophosphate (PRPP) to anthranilate to yield N-(5'-phosphoribosyl)-anthranilate (PRA). This chain is Anthranilate phosphoribosyltransferase, found in Bradyrhizobium sp. (strain BTAi1 / ATCC BAA-1182).